The sequence spans 179 residues: Large ribosomal subunit protein uL5 (179 aa).

It belongs to the universal ribosomal protein uL5 family. Part of the 50S ribosomal subunit; part of the 5S rRNA/L5/L18/L25 subcomplex. Contacts the 5S rRNA and the P site tRNA. Forms a bridge to the 30S subunit in the 70S ribosome.

Functionally, this is one of the proteins that bind and probably mediate the attachment of the 5S RNA into the large ribosomal subunit, where it forms part of the central protuberance. In the 70S ribosome it contacts protein S13 of the 30S subunit (bridge B1b), connecting the 2 subunits; this bridge is implicated in subunit movement. Contacts the P site tRNA; the 5S rRNA and some of its associated proteins might help stabilize positioning of ribosome-bound tRNAs. This is Large ribosomal subunit protein uL5 from Bordetella bronchiseptica (strain ATCC BAA-588 / NCTC 13252 / RB50) (Alcaligenes bronchisepticus).